We begin with the raw amino-acid sequence, 521 residues long: ATP synthase subunit beta (521 aa).

Low complexity-rich tracts occupy residues 1–21 and 28–42; these read MAKA…AAKA and PKTT…TKSG. Residues 1 to 42 are disordered; the sequence is MAKAATPKTTAAAEAKPAAKAPAKKAAPKTTAAAKPAATKSG. 199-206 contacts ATP; the sequence is GGAGVGKT.

It belongs to the ATPase alpha/beta chains family. F-type ATPases have 2 components, CF(1) - the catalytic core - and CF(0) - the membrane proton channel. CF(1) has five subunits: alpha(3), beta(3), gamma(1), delta(1), epsilon(1). CF(0) has three main subunits: a(1), b(2) and c(9-12). The alpha and beta chains form an alternating ring which encloses part of the gamma chain. CF(1) is attached to CF(0) by a central stalk formed by the gamma and epsilon chains, while a peripheral stalk is formed by the delta and b chains.

It is found in the cell inner membrane. The catalysed reaction is ATP + H2O + 4 H(+)(in) = ADP + phosphate + 5 H(+)(out). Its function is as follows. Produces ATP from ADP in the presence of a proton gradient across the membrane. The catalytic sites are hosted primarily by the beta subunits. The polypeptide is ATP synthase subunit beta (Brucella canis (strain ATCC 23365 / NCTC 10854 / RM-666)).